We begin with the raw amino-acid sequence, 588 residues long: Pectinesterase 4 (588 aa).

The N-terminal stretch at 1 to 24 (MIGKVVVSVASILLIVGVAIGVVA) is a signal peptide. N-linked (GlcNAc...) asparagine glycosylation is found at Asn86, Asn206, and Asn342. Residues Thr353 and Gln383 each coordinate substrate. Asp406 serves as the catalytic Proton donor. Asp427 (nucleophile) is an active-site residue. 2 residues coordinate substrate: Arg496 and Trp498.

The protein in the N-terminal section; belongs to the PMEI family. This sequence in the C-terminal section; belongs to the pectinesterase family. In terms of tissue distribution, expressed in pollen grains and pollen tubes.

The protein localises to the secreted. The protein resides in the cell wall. It catalyses the reaction [(1-&gt;4)-alpha-D-galacturonosyl methyl ester](n) + n H2O = [(1-&gt;4)-alpha-D-galacturonosyl](n) + n methanol + n H(+). The protein operates within glycan metabolism; pectin degradation; 2-dehydro-3-deoxy-D-gluconate from pectin: step 1/5. Functionally, acts in the modification of cell walls via demethylesterification of cell wall pectin. Plays an important role in growth of pollen tubes in female floral tissues, possibly via enhancing the interaction between the pollen tube and female floral tissues by modification of the cell walls. The polypeptide is Pectinesterase 4 (PME4) (Arabidopsis thaliana (Mouse-ear cress)).